Here is a 399-residue protein sequence, read N- to C-terminus: Acetate kinase (399 aa).

Asn-7 is a binding site for Mg(2+). Lys-14 contacts ATP. Position 91 (Arg-91) interacts with substrate. Catalysis depends on Asp-148, which acts as the Proton donor/acceptor. ATP contacts are provided by residues 208–212 (HLGNG), 283–285 (DFR), and 331–335 (GLGEN). Mg(2+) is bound at residue Glu-384.

This sequence belongs to the acetokinase family. Homodimer. The cofactor is Mg(2+). It depends on Mn(2+) as a cofactor.

It is found in the cytoplasm. The enzyme catalyses acetate + ATP = acetyl phosphate + ADP. It functions in the pathway metabolic intermediate biosynthesis; acetyl-CoA biosynthesis; acetyl-CoA from acetate: step 1/2. Its function is as follows. Catalyzes the formation of acetyl phosphate from acetate and ATP. Can also catalyze the reverse reaction. The protein is Acetate kinase of Desulfitobacterium hafniense (strain DSM 10664 / DCB-2).